A 344-amino-acid chain; its full sequence is Nuclear distribution protein nudE homolog 1 (344 aa).

Residues 1–93 (MEDSGKTFES…MQHSEGYRQI (93 aa)) are self-association. The stretch at 18–188 (WRDLAMTYKQ…ELAVQQKQDK (171 aa)) forms a coiled coil. The interval 88 to 156 (EGYRQISALE…ERNAFLESEL (69 aa)) is interaction with PAFAH1B1. The segment at 167–290 (QRLKDEARDL…QSPSRTSGPA (124 aa)) is interaction with CENPF. Residues 181-246 (AVQQKQDKPR…DSSTSGTPLT (66 aa)) form a disordered region. At serine 211 the chain carries Phosphoserine. Residues threonine 215 and threonine 228 each carry the phosphothreonine modification. The residue at position 239 (serine 239) is a Phosphoserine. Phosphothreonine occurs at positions 243 and 246. Cysteine 274 carries S-palmitoyl cysteine; by ZDHHC2, ZDHHC3 and ZDHHC7 lipidation. The segment covering 279–289 (YDQSPSRTSGP) has biased composition (polar residues). A disordered region spans residues 279-337 (YDQSPSRTSGPASGRGTKNRDGVDRRPGSTSVGDKGSGKRLEFGKPASEPASPALPSAQ). Serine 282 is modified (phosphoserine). Residues 296-305 (KNRDGVDRRP) show a composition bias toward basic and acidic residues. Serine 309 bears the Phosphoserine mark. Positions 324–336 (PASEPASPALPSA) are enriched in low complexity.

This sequence belongs to the nudE family. Homodimer. Interacts with dynactin and PCM1. Interacts with CENPF, LIS1, CNTRL, dynein, tubulin gamma, PAFAH1B1, PCNT, SLMAP and TCP1. Interacts with ZNF365. Interacts with RAB9A; the interaction leads to RAB9A-dynein motor tethering. Interacts (via C-terminus) with MCRS1 (via C-terminus); phosphorylation of NDE1 inhibits the interaction. In terms of processing, phosphorylated in mitosis. Phosphorylation at Thr-246 is essential for the G2/M transition. In terms of tissue distribution, highly expressed in ovary. Also expressed in brain, heart, kidney, large intestine, liver, lung, small intestine and testis.

The protein localises to the cytoplasm. It is found in the cytoskeleton. The protein resides in the microtubule organizing center. It localises to the centrosome. Its subcellular location is the spindle. The protein localises to the chromosome. It is found in the centromere. The protein resides in the kinetochore. It localises to the cleavage furrow. Its subcellular location is the cytoplasmic vesicle membrane. Functionally, required for centrosome duplication and formation and function of the mitotic spindle. Essential for the development of the cerebral cortex. May regulate the production of neurons by controlling the orientation of the mitotic spindle during division of cortical neuronal progenitors of the proliferative ventricular zone of the brain. Orientation of the division plane perpendicular to the layers of the cortex gives rise to two proliferative neuronal progenitors whereas parallel orientation of the division plane yields one proliferative neuronal progenitor and a postmitotic neuron. A premature shift towards a neuronal fate within the progenitor population may result in an overall reduction in the final number of neurons and an increase in the number of neurons in the deeper layers of the cortex. Acts as a RAB9A/B effector that tethers RAB9-associated late endosomes to the dynein motor for their retrograde transport to the trans-Golgi network. The chain is Nuclear distribution protein nudE homolog 1 from Mus musculus (Mouse).